A 558-amino-acid polypeptide reads, in one-letter code: Glutamine--tRNA ligase (558 aa).

A 'HIGH' region motif is present at residues 36–46 (PEPNGYLHLGH). Residues 37 to 39 (EPN) and 43 to 49 (HLGHAKS) each bind ATP. Asp69 and Tyr214 together coordinate L-glutamine. ATP contacts are provided by residues Thr233, 263 to 264 (RL), and 271 to 273 (LSK). Residues 270–274 (LLSKR) carry the 'KMSKS' region motif.

Belongs to the class-I aminoacyl-tRNA synthetase family. As to quaternary structure, monomer.

It is found in the cytoplasm. The catalysed reaction is tRNA(Gln) + L-glutamine + ATP = L-glutaminyl-tRNA(Gln) + AMP + diphosphate. The protein is Glutamine--tRNA ligase of Nitrobacter hamburgensis (strain DSM 10229 / NCIMB 13809 / X14).